Consider the following 165-residue polypeptide: MNGLTATGVTVGICAGLWQLVSSHVGLSQGWELLGTIGFVAFCSFYAAGGGKSGFIRSLAVNYSGMVWAFFAALTAGWLASVSGLSAFWASVITTVPFSAVVVWQGRFWLLSFIPGGFLGMTLFFASGMNWTVTLLGFLAGNCVGVISEYGGQKLSEATTKRDGY.

Helical transmembrane passes span Gly30 to Gly50, Gly65 to Leu85, Ser86 to Gly106, Phe108 to Gly128, and Trp131 to Gly151.

It to E.coli YcdZ.

The protein localises to the cell membrane. This is an uncharacterized protein from Escherichia coli (strain K12).